The chain runs to 290 residues: UPF0046 protein K07C11.7 (290 aa).

The first 22 residues, 1-22 (MFHFSIGTVLISICWLAQWMEA), serve as a signal peptide directing secretion. Residue Asn-204 is glycosylated (N-linked (GlcNAc...) asparagine).

Belongs to the UPF0046 family.

The protein is UPF0046 protein K07C11.7 of Caenorhabditis elegans.